A 445-amino-acid polypeptide reads, in one-letter code: Methionine aminopeptidase 2-1 (445 aa).

Residues 1–86 (MAAQASEDLQ…VQSEPPRVPL (86 aa)) are disordered. Residues 34 to 46 (GEAEDDSDDDADE) show a composition bias toward acidic residues. The span at 59-74 (AKKKKKRKSKKKKKGG) shows a compositional bias: basic residues. His198 provides a ligand contact to substrate. Residues Asp218, Asp229, and His298 each contribute to the a divalent metal cation site. His306 provides a ligand contact to substrate. A divalent metal cation is bound by residues Glu331 and Glu426.

The protein belongs to the peptidase M24A family. Methionine aminopeptidase eukaryotic type 2 subfamily. Co(2+) serves as cofactor. Zn(2+) is required as a cofactor. It depends on Mn(2+) as a cofactor. Requires Fe(2+) as cofactor.

The protein localises to the cytoplasm. The enzyme catalyses Release of N-terminal amino acids, preferentially methionine, from peptides and arylamides.. Its function is as follows. Cotranslationally removes the N-terminal methionine from nascent proteins. The N-terminal methionine is often cleaved when the second residue in the primary sequence is small and uncharged (Met-Ala-, Cys, Gly, Pro, Ser, Thr, or Val). The protein is Methionine aminopeptidase 2-1 of Aspergillus flavus (strain ATCC 200026 / FGSC A1120 / IAM 13836 / NRRL 3357 / JCM 12722 / SRRC 167).